We begin with the raw amino-acid sequence, 2922 residues long: Small ribosomal subunit protein uS4c (2922 aa).

The 64-residue stretch at 111–174 (MRLDNIVFRL…ISMELVSRFL (64 aa)) folds into the S4 RNA-binding domain.

This sequence belongs to the universal ribosomal protein uS4 family. Part of the 30S ribosomal subunit. Contacts protein S5. The interaction surface between S4 and S5 is involved in control of translational fidelity.

The protein resides in the plastid. It is found in the chloroplast. In terms of biological role, one of the primary rRNA binding proteins, it binds directly to 16S rRNA where it nucleates assembly of the body of the 30S subunit. Functionally, with S5 and S12 plays an important role in translational accuracy. In Stigeoclonium helveticum (Green alga), this protein is Small ribosomal subunit protein uS4c (rps4).